Reading from the N-terminus, the 724-residue chain is Ribosomal RNA processing protein 1 homolog B (724 aa).

The tract at residues 331-576 (NGAPLSSAED…SKKKKKTMKL (246 aa)) is disordered. A phosphoserine mark is found at Ser-336 and Ser-370. Basic residues predominate over residues 373–386 (HIHKKKRKKRKRSH). Phosphoserine occurs at positions 432 and 438. A compositionally biased stretch (basic residues) spans 448-461 (HNKRKRPRKKKLRA). Residues 483-496 (SGHSQSSAAHISSS) show a composition bias toward low complexity. Ser-494 carries the phosphoserine modification. Polar residues-rich tracts occupy residues 513–528 (DSSS…TPTS) and 548–564 (KTAS…SQKP). An N6-acetyllysine modification is found at Lys-618. The segment at 625–649 (AKNSSATRPQGPAGQLNKTPSSSKK) is disordered. The span at 640–649 (LNKTPSSSKK) shows a compositional bias: polar residues. Residues Ser-668 and Ser-672 each carry the phosphoserine modification. At Arg-678 the chain carries Citrulline. Residues 687 to 724 (PLHGVLKTATSSPASTPLSPMRLPATTPKRRPRAADFF) are disordered. Thr-694 is subject to Phosphothreonine. The span at 694–706 (TATSSPASTPLSP) shows a compositional bias: low complexity. Ser-698 and Ser-701 each carry phosphoserine.

The protein belongs to the RRP1 family. As to quaternary structure, interacts with the transcriptional activator E2F1. Interacts with serine/threonine-protein phosphatase PP1 subunits PPP1CB and PPP1CC but not with PPP1CA. Interacts with 60S ribosomal proteins RPL5 and RPL27, ribosomal processing protein RRP1/NNP1 and other nucleolar proteins including NOP2/NOL1 and FBL. Also interacts with nucleolar protein NPM1/B23. Interacts with splicing factor SRSF1 and LUC7L3/CROP. Interacts with GTPase activator SIPA1. Interacts with H1-10, NCL, PARP1, TRIM28 and YBX3. Citrullinated by PADI4.

It is found in the nucleus. The protein resides in the nucleolus. Its subcellular location is the nucleoplasm. The protein localises to the chromosome. Its function is as follows. Positively regulates DNA damage-induced apoptosis by acting as a transcriptional coactivator of proapoptotic target genes of the transcriptional activator E2F1. Likely to play a role in ribosome biogenesis by targeting serine/threonine protein phosphatase PP1 to the nucleolus. Involved in regulation of mRNA splicing. Inhibits SIPA1 GTPase activity. Involved in regulating expression of extracellular matrix genes. Associates with chromatin and may play a role in modulating chromatin structure. The chain is Ribosomal RNA processing protein 1 homolog B (Rrp1b) from Mus musculus (Mouse).